We begin with the raw amino-acid sequence, 454 residues long: Protein odr-4 homolog (454 aa).

The next 2 membrane-spanning stretches (helical) occupy residues 82 to 102 (MLPG…ELAN) and 432 to 452 (IGVI…FHYF).

Belongs to the ODR-4 family.

Its subcellular location is the membrane. May play a role in the trafficking of a subset of G-protein coupled receptors. This Pongo abelii (Sumatran orangutan) protein is Protein odr-4 homolog (ODR4).